The primary structure comprises 344 residues: Methionine import ATP-binding protein MetN (344 aa).

The ABC transporter domain maps to 2–241 (IKLEKISKIF…PQTQLAKEFI (240 aa)). Position 38–45 (38–45 (GASGAGKS)) interacts with ATP.

It belongs to the ABC transporter superfamily. Methionine importer (TC 3.A.1.24) family. The complex is composed of two ATP-binding proteins (MetN), two transmembrane proteins (MetI) and a solute-binding protein (MetQ).

The protein resides in the cell inner membrane. It catalyses the reaction L-methionine(out) + ATP + H2O = L-methionine(in) + ADP + phosphate + H(+). It carries out the reaction D-methionine(out) + ATP + H2O = D-methionine(in) + ADP + phosphate + H(+). In terms of biological role, part of the ABC transporter complex MetNIQ involved in methionine import. Responsible for energy coupling to the transport system. The protein is Methionine import ATP-binding protein MetN of Pasteurella multocida (strain Pm70).